The following is a 358-amino-acid chain: Protein FAM50 homolog (358 aa).

Over residues 104–113 the composition is skewed to basic and acidic residues; it reads AKLAEKDRQK. The tract at residues 104–151 is disordered; the sequence is AKLAEKDRQKRQIQALSFDPDDEPDGDDANDGDEGSGKESEKEDVKEE. The span at 122–137 shows a compositional bias: acidic residues; sequence DPDDEPDGDDANDGDE. Positions 138-151 are enriched in basic and acidic residues; sequence GSGKESEKEDVKEE.

It belongs to the FAM50 family.

The sequence is that of Protein FAM50 homolog from Anopheles gambiae (African malaria mosquito).